A 249-amino-acid chain; its full sequence is Cilia- and flagella-associated protein 410 (249 aa).

LRR repeat units follow at residues 19-40 (NVRK…REMP), 41-62 (SLEV…RSCR), and 63-84 (RLSE…FYLK). The LRRCT domain maps to 97–137 (NPCCGTSPHLYRMTVLRNLPHLQKLDNQAVTEEELTRALME). The interval 146-203 (HREGAGNGCPKPPYALNSVSSATETSQHLLSYTEETEVQGQTTTDQSPSFSPRDTMRS) is disordered. The segment covering 162 to 175 (NSVSSATETSQHLL) has biased composition (polar residues).

Found in a complex with CFAP410, NEK1 and SPATA7. Interacts with NEK1. In terms of tissue distribution, expressed in the retina.

It localises to the cell projection. Its subcellular location is the cilium. It is found in the cytoplasm. The protein localises to the cytoskeleton. The protein resides in the cilium basal body. It localises to the mitochondrion. Its subcellular location is the photoreceptor outer segment. In terms of biological role, plays a role in cilia formation and/or maintenance. Plays a role in the regulation of cell morphology and cytoskeletal organization. Involved in DNA damage repair. This Mus musculus (Mouse) protein is Cilia- and flagella-associated protein 410.